The primary structure comprises 367 residues: Carbamoyl phosphate synthase small chain (367 aa).

Residues 1 to 182 are CPSase; sequence MKLENKKGYL…PIFHPNTGDM (182 aa). Residues Ser50, Gly230, and Gly232 each contribute to the L-glutamine site. Positions 182 to 367 constitute a Glutamine amidotransferase type-1 domain; it reads MIVVVDCGIK…DKFRTMVTGK (186 aa). The active-site Nucleophile is the Cys258. L-glutamine contacts are provided by Leu259, Gln262, Asn300, Gly302, and Tyr303. Catalysis depends on residues His343 and Glu345.

Belongs to the CarA family. In terms of assembly, composed of two chains; the small (or glutamine) chain promotes the hydrolysis of glutamine to ammonia, which is used by the large (or ammonia) chain to synthesize carbamoyl phosphate. Tetramer of heterodimers (alpha,beta)4.

It carries out the reaction hydrogencarbonate + L-glutamine + 2 ATP + H2O = carbamoyl phosphate + L-glutamate + 2 ADP + phosphate + 2 H(+). The catalysed reaction is L-glutamine + H2O = L-glutamate + NH4(+). It participates in amino-acid biosynthesis; L-arginine biosynthesis; carbamoyl phosphate from bicarbonate: step 1/1. Its pathway is pyrimidine metabolism; UMP biosynthesis via de novo pathway; (S)-dihydroorotate from bicarbonate: step 1/3. In terms of biological role, small subunit of the glutamine-dependent carbamoyl phosphate synthetase (CPSase). CPSase catalyzes the formation of carbamoyl phosphate from the ammonia moiety of glutamine, carbonate, and phosphate donated by ATP, constituting the first step of 2 biosynthetic pathways, one leading to arginine and/or urea and the other to pyrimidine nucleotides. The small subunit (glutamine amidotransferase) binds and cleaves glutamine to supply the large subunit with the substrate ammonia. In Saccharolobus solfataricus (strain ATCC 35092 / DSM 1617 / JCM 11322 / P2) (Sulfolobus solfataricus), this protein is Carbamoyl phosphate synthase small chain.